We begin with the raw amino-acid sequence, 144 residues long: Kunitz-type elastase inhibitor BrEI (144 aa).

Residue Asn38 is glycosylated (N-linked (GlcNAc...) asparagine). Cys41 and Cys88 are disulfide-bonded.

The protein belongs to the leguminous Kunitz-type inhibitor family.

Functionally, inhibitor of porcine pancreatic elastase with a Ki of 27 nM. Does not inhibit human neutrophil elastase, bovine trypsin, human plasma kallikrein or porcine pancreatic kallikrein. The polypeptide is Kunitz-type elastase inhibitor BrEI (Bauhinia rufa (Orchid tree)).